The chain runs to 193 residues: Segregation and condensation protein B (193 aa).

It belongs to the ScpB family. As to quaternary structure, homodimer. Homodimerization may be required to stabilize the binding of ScpA to the Smc head domains. Component of a cohesin-like complex composed of ScpA, ScpB and the Smc homodimer, in which ScpA and ScpB bind to the head domain of Smc. The presence of the three proteins is required for the association of the complex with DNA.

It localises to the cytoplasm. Its function is as follows. Participates in chromosomal partition during cell division. May act via the formation of a condensin-like complex containing Smc and ScpA that pull DNA away from mid-cell into both cell halves. This chain is Segregation and condensation protein B, found in Streptococcus thermophilus (strain ATCC BAA-250 / LMG 18311).